The primary structure comprises 662 residues: Protein-arginine deiminase type-1 (662 aa).

Residues Asn-153, Asp-155, Asp-157, Asp-164, Asp-175, Asp-178, Gln-350, Glu-352, Lys-363, Asp-370, Ser-371, Asn-374, Phe-408, and Leu-411 each coordinate Ca(2+). Cys-644 (nucleophile) is an active-site residue.

It belongs to the protein arginine deiminase family. In terms of assembly, monomer. Requires Ca(2+) as cofactor. In terms of tissue distribution, expressed only in the epidermis and uterus.

The protein localises to the cytoplasm. The catalysed reaction is L-arginyl-[protein] + H2O = L-citrullyl-[protein] + NH4(+). Catalyzes the deimination of arginine residues of proteins. The chain is Protein-arginine deiminase type-1 (Padi1) from Mus musculus (Mouse).